Here is a 590-residue protein sequence, read N- to C-terminus: Neuronal PAS domain-containing protein 1 (590 aa).

The region spanning 45–98 (QRKEKSRNAARSRRGKENLEFFELAKLLPLPGAISSQLDKASIVRLSVTYLRLR) is the bHLH domain. Residues 135–207 (EQHLGGHILQ…LGLRTPTPGP (73 aa)) enclose the PAS 1 domain. Positions 198-229 (LGLRTPTPGPPTPPSVSSSSSSSSSLADTPEI) are disordered. Over residues 212–222 (SVSSSSSSSSS) the composition is skewed to low complexity. The region spanning 293–359 (APLAELPLHG…IRQSHVDLLD (67 aa)) is the PAS 2 domain. The PAC domain occupies 365-408 (TGYYRWLQRAGGFVWLQSVATVAGSGKSPGEHHVLWVSHVLSQA). The tract at residues 425 to 494 (ACEEASSPGP…SHPATPRPEF (70 aa)) is disordered. Pro residues predominate over residues 433 to 442 (GPEPTEPEPP). Positions 463 to 476 (IKVEPGPRETKGSE) are enriched in basic and acidic residues.

As to quaternary structure, efficient DNA binding requires dimerization with another bHLH protein. Interacts with ARNT; forms a heterodimer that binds core DNA sequence 5'-[AG]CGTG-3' within the hypoxia response element (HRE) leading to a transcriptional repressor on its target gene TH.

The protein localises to the nucleus. In terms of biological role, may control regulatory pathways relevant to schizophrenia and to psychotic illness. May play a role in late central nervous system development by modulating EPO expression in response to cellular oxygen level. Forms a heterodimer that binds core DNA sequence 5'-TACGTG-3' within the hypoxia response element (HRE) leading to transcriptional repression on its target gene TH. This chain is Neuronal PAS domain-containing protein 1 (NPAS1), found in Homo sapiens (Human).